A 376-amino-acid polypeptide reads, in one-letter code: uncharacterized protein (376 aa).

Belongs to the mimivirus R1 family.

This is an uncharacterized protein from Acanthamoeba polyphaga mimivirus (APMV).